Reading from the N-terminus, the 241-residue chain is Beta-nerve growth factor (241 aa).

The N-terminal stretch at 1 to 18 (MSMLFYTLITAFLIGVQA) is a signal peptide. Positions 19-121 (EPYTDSNVPE…PFNRTHRSKR (103 aa)) are excised as a propeptide. Asn69 and Asn114 each carry an N-linked (GlcNAc...) asparagine glycan. Disulfide bonds link Cys136/Cys201, Cys179/Cys229, and Cys189/Cys231. The a 1-acyl-sn-glycero-3-phospho-(1D-myo-inositol) site is built by Arg171, Tyr173, and Lys209. A 1-acyl-sn-glycero-3-phospho-L-serine is bound at residue Arg171. Lys209 contacts a 1-acyl-sn-glycero-3-phospho-L-serine.

Belongs to the NGF-beta family. In terms of assembly, homodimer. The homodimer interacts with a single NTRK1 chain. The homodimer interacts with a single NGFR chain. The NGF dimer interacts with a single SORCS2 chain (via extracellular domain). The NGF precursor (proNGF) binds to a receptor complex formed by SORT1 and NGFR, which leads to NGF endocytosis. Both mature NGF and the immature NGF precursor (proNGF) interact with SORCS2 and with the heterodimer formed by SORCS2 and NGFR (via extracellular domains). The NGF precursor (proNGF) has much higher affinity for SORCS2 than mature NGF. The NGF precursor (proNGF) has much higher affinity for SORT1 than mature NGF. Interacts with ADAM10 in a divalent cation-dependent manner. Interacts with SORCS3. As to expression, detected in submaxillary gland (at protein level). Highly expressed in male submaxillary gland. Levels are much lower in female submaxillary gland.

The protein resides in the secreted. Its subcellular location is the endosome lumen. Functionally, nerve growth factor is important for the development and maintenance of the sympathetic and sensory nervous systems. Extracellular ligand for the NTRK1 and NGFR receptors, activates cellular signaling cascades to regulate neuronal proliferation, differentiation and survival. The immature NGF precursor (proNGF) functions as a ligand for the heterodimeric receptor formed by SORCS2 and NGFR, and activates cellular signaling cascades that lead to inactivation of RAC1 and/or RAC2, reorganization of the actin cytoskeleton and neuronal growth cone collapse. In contrast to mature NGF, the precursor form (proNGF) promotes neuronal apoptosis (in vitro). Inhibits metalloproteinase-dependent proteolysis of platelet glycoprotein VI. Binds lysophosphatidylinositol and lysophosphatidylserine between the two chains of the homodimer. The lipid-bound form promotes histamine relase from mast cells, contrary to the lipid-free form. This Mus musculus (Mouse) protein is Beta-nerve growth factor (Ngf).